A 541-amino-acid polypeptide reads, in one-letter code: Eukaryotic translation initiation factor 3 subunit D-1 (541 aa).

The disordered stretch occupies residues 98–136 (VQKPPHQRGRFRNMRGRGGRGRNPRGGLNNHHHHGMTTL). A compositionally biased stretch (basic residues) spans 100–120 (KPPHQRGRFRNMRGRGGRGRN).

This sequence belongs to the eIF-3 subunit D family. Component of the eukaryotic translation initiation factor 3 (eIF-3) complex. The eIF-3 complex interacts with pix.

Its subcellular location is the cytoplasm. MRNA cap-binding component of the eukaryotic translation initiation factor 3 (eIF-3) complex, which is involved in protein synthesis of a specialized repertoire of mRNAs and, together with other initiation factors, stimulates binding of mRNA and methionyl-tRNAi to the 40S ribosome. The eIF-3 complex specifically targets and initiates translation of a subset of mRNAs involved in cell proliferation. In the eIF-3 complex, eif3d specifically recognizes and binds the 7-methylguanosine cap of a subset of mRNAs. The sequence is that of Eukaryotic translation initiation factor 3 subunit D-1 from Drosophila persimilis (Fruit fly).